We begin with the raw amino-acid sequence, 388 residues long: Probable proton-coupled zinc antiporter SLC30A3 (388 aa).

The disordered stretch occupies residues 1–46 (MEPSPAAGGLETTRLVSPRDRGGAGGSLRLKSLFTEPSEPLPEESK). Residues 1-75 (MEPSPAAGGL…TPERLHARRQ (75 aa)) lie on the Cytoplasmic side of the membrane. Residues 76 to 96 (LYAACAVCFVFMAGEVVGGYL) form a helical membrane-spanning segment. The Lumenal portion of the chain corresponds to 97 to 105 (AHSLAIMTD). Residues 106–126 (AAHLLADVGSMMGSLFSLWLS) form a helical membrane-spanning segment. The Zn(2+) site is built by H108 and D112. Topologically, residues 127–145 (TRPATRTMTFGWHRSETLG) are cytoplasmic. The helical transmembrane segment at 146–166 (ALASVVSLWMVTGILLYLAFV) threads the bilayer. The Lumenal segment spans residues 167–177 (RLLHSDYHIEG). Residues 178–198 (GAMLLTASIAVCANLLMAFVL) form a helical membrane-spanning segment. The Cytoplasmic segment spans residues 199–235 (HQAGPPHSHGSRGAEYAPLEEGPEEPLPLGNTSVRAA). Residues 236-256 (FVHVLGDLLQSFGVLAASILI) traverse the membrane as a helical segment. 2 residues coordinate Zn(2+): H238 and D242. At 257 to 264 (YFKPQYKA) the chain is on the lumenal side. The chain crosses the membrane as a helical span at residues 265–285 (ADPISTFLFSICALGSTAPTL). At 286–388 (RDVLRILMEG…CLRCQEPPQA (103 aa)) the chain is on the cytoplasmic side. Y357 participates in a covalent cross-link: Dityrosine (Tyr-Tyr) (interchain with Y-372). Y372 is covalently cross-linked (Dityrosine (Tyr-Tyr) (interchain with Y-357)).

Belongs to the cation diffusion facilitator (CDF) transporter (TC 2.A.4) family. SLC30A subfamily. As to quaternary structure, homodimer; dityrosine-linked. Homodimerization seems specific of the human protein and enhances the zinc transport efficiency. Interacts with TMEM163. Homodimerization through dityrosine bonds is stimulated by oxidative stress.

It is found in the cytoplasmic vesicle. The protein resides in the secretory vesicle. Its subcellular location is the synaptic vesicle membrane. It localises to the synapse. The protein localises to the synaptosome. It is found in the late endosome membrane. The protein resides in the lysosome membrane. It catalyses the reaction Zn(2+)(in) + 2 H(+)(out) = Zn(2+)(out) + 2 H(+)(in). Functionally, probable proton-coupled zinc ion antiporter mediating the import of zinc from cytoplasm into synaptic vesicles and participating to cellular zinc ion homeostasis in the brain. This Homo sapiens (Human) protein is Probable proton-coupled zinc antiporter SLC30A3.